We begin with the raw amino-acid sequence, 123 residues long: MKKNFRVKREKDFKAIFKEGTSFANRKFVVYQLENQKNHFRVGLSVSKKLGNAVTRNQIKRRIRHIIQNAKGSLVEDVDFVVIARKGVETLGYAEMEKNLLHVLKLSKIYREGNGSEKETKVD.

The protein belongs to the RnpA family. In terms of assembly, consists of a catalytic RNA component (M1 or rnpB) and a protein subunit.

It catalyses the reaction Endonucleolytic cleavage of RNA, removing 5'-extranucleotides from tRNA precursor.. In terms of biological role, RNaseP catalyzes the removal of the 5'-leader sequence from pre-tRNA to produce the mature 5'-terminus. It can also cleave other RNA substrates such as 4.5S RNA. The protein component plays an auxiliary but essential role in vivo by binding to the 5'-leader sequence and broadening the substrate specificity of the ribozyme. This chain is Ribonuclease P protein component, found in Streptococcus pneumoniae (strain JJA).